A 1407-amino-acid chain; its full sequence is E3 ubiquitin-protein ligase linker protein MMS1 (1407 aa).

Positions Met1–Ile600 are required for interaction with MMS22. A Phosphothreonine modification is found at Thr1294.

In terms of assembly, component of multiple cullin-RING ligases (CRLs) composed of 4 subunits: the RING protein HRT1, the cullin RTT101, a linker protein MMS1, and one of many alternative substrate receptors belonging to a protein family described as DCAF (DDB1- and CUL4-associated factor). Component of a RTT101(MMS1-MMS22) complex with the substrate receptor MMS22. This complex further interacts with RTT107 and CTF4 to form RTT101-MMS1-MMS22-RTT107 and RTT101-MMS1-MMS22-CTF4 complexes respectively. Component of a RTT101(MSS1-CRT10) complex with the substrate receptor CRT10. Component of a RTT101(MSS1-ESC2) complex with the potential substrate receptor ESC2. Component of a RTT101(MSS1-ORC5) complex with the potential substrate receptor ORC5. Interacts with RTT101 (via N-ter). Interacts (via N-ter) with MMS22 (via C-ter). Interacts with CRT10.

It is found in the nucleus. Functionally, component of multiple cullin-RING-based E3 ubiquitin-protein ligase complexes (CRLs), which mediate the ubiquitination of target proteins. The CRL associates with CDC34 as the E2 ubiquitin-conjugating enzyme. The functional specificity of the CRL depends on the type of the associated substrate receptor protein. RTT101(MMS1-MMS22) promotes fork progression through damaged DNA or natural pause sites by stabilizing replication proteins like the replication fork-pausing complex (FPC) and leading-strand polymerase at stalled replication forks. RTT101(MMS1-MMS22) ubiquitinates the acetylated histones H3K56ac-H4 at lysine residues H3K121, H3K122 and H3K125. Ubiquitination is required for efficient histone deposition during replication-coupled nucleosome assembly, probably by facilitating the transfer of H3-H4 from ASF1 to other chaperones involved in histone deposition. RTT101(MMS1-CRT10) may regulate nucleotide synthesis through transcriptional regulation of ribonucleotide reductase. RTT101(MMS1) is also involved in the non-functional rRNA decay (NRD) of 25S rRNA through the selective, ubiquitination-dependent degradation of nonfunctional ribosomal particles. Involved in the regulation of TY1 transposition. The protein is E3 ubiquitin-protein ligase linker protein MMS1 (MMS1) of Saccharomyces cerevisiae (strain ATCC 204508 / S288c) (Baker's yeast).